Here is a 457-residue protein sequence, read N- to C-terminus: MGADVLIEQEISYTINFSQDLLYLILDSYIKKRCAAPAERYTDLYDANNVRTRQTADSAVSVHKTNLRDERFVHWLRSSNALVPLVRRENRETAVPHDRVSRHIASLIETTVYKLDGVDVKFEHVYMQSGPADRYESTAAHKIAALKTALLGVDCARPSQNLQLGSDAVLARVRLELEFEGAAPAAASLDAFCELVVQMETLADHHNIAPCLPYTTLLDSATPRRFTREQRIAYGAQAPDSTGVKKWAFKLDGVRGRGAFRRGYCLVQTDDMQLHAACISSPFGLNNVVTFQCEVVADKIFVTDLLQVFRYKYNNRTQYECNLHDAYPINADVAVECLNRLHCAVGSVPWPGLGELRFQQFFDPPLAPTHYTTIPIDGYIVLDEQLQYAKYKWLPTVELEYDAPSGALHSIDGPLLGKTVVADLQLKHGAVYECAITDNAINVLKCRPDRIVPSKVC.

The tract at residues 1 to 199 (MGADVLIEQE…DAFCELVVQM (199 aa)) is mRNA triphosphatase. Residues 200-454 (ETLADHHNIA…KCRPDRIVPS (255 aa)) form an mRNA guanylyltransferase region. K250 acts as the N6-GMP-lysine intermediate in catalysis.

This sequence belongs to the baculoviridae LEF-4 family.

It localises to the host cytoplasm. Its subcellular location is the host nucleus. It catalyses the reaction a 5'-end diphospho-ribonucleoside in mRNA + GTP + H(+) = a 5'-end (5'-triphosphoguanosine)-ribonucleoside in mRNA + diphosphate. It carries out the reaction a 5'-end triphospho-ribonucleoside in mRNA + H2O = a 5'-end diphospho-ribonucleoside in mRNA + phosphate + H(+). Functionally, component of the viral DNA-dependent RNA polymerase that catalyzes two reactions involved in viral RNA cap formation: an RNA 5'-triphosphatase that hydrolyzes the gamma phosphate of triphosphate-terminated RNA and a guanylyltransferase that reacts with GTP to form a covalent protein-guanylate adduct. Therefore plays an essential role in late and very late gene expression. The chain is mRNA capping enzyme LEF-4 (LEF-4) from Orgyia pseudotsugata (Douglas-fir tussock moth).